The following is a 31-amino-acid chain: Cyclotide vico-A (31 aa).

Residues 1-31 (GSIPCAESCVYIPCFTGIAGCSCKNKVCYYN) constitute a cross-link (cyclopeptide (Gly-Asn)). 3 disulfides stabilise this stretch: cysteine 5–cysteine 21, cysteine 9–cysteine 23, and cysteine 14–cysteine 28.

It belongs to the cyclotide family. Bracelet subfamily. In terms of processing, this is a cyclic peptide.

In terms of biological role, probably participates in a plant defense mechanism. The polypeptide is Cyclotide vico-A (Viola cotyledon (Violeta)).